Reading from the N-terminus, the 227-residue chain is Cytochrome c oxidase subunit 2 (227 aa).

Residues 1–14 (MAYPFQLGLQDATS) lie on the Mitochondrial intermembrane side of the membrane. The helical transmembrane segment at 15 to 45 (PIMEELMNFHDHTLMIVFLISTLVLYIISLM) threads the bilayer. Topologically, residues 46–59 (LTTKLTHTSTMDAQ) are mitochondrial matrix. The helical transmembrane segment at 60–87 (EVETVWTILPAVILIMIALPSLRILYMM) threads the bilayer. Residues 88-227 (DEINNPVLTV…HFENWSTSMI (140 aa)) lie on the Mitochondrial intermembrane side of the membrane. Positions 161, 196, 198, 200, 204, and 207 each coordinate Cu cation. Position 198 (E198) interacts with Mg(2+).

This sequence belongs to the cytochrome c oxidase subunit 2 family. In terms of assembly, component of the cytochrome c oxidase (complex IV, CIV), a multisubunit enzyme composed of 14 subunits. The complex is composed of a catalytic core of 3 subunits MT-CO1, MT-CO2 and MT-CO3, encoded in the mitochondrial DNA, and 11 supernumerary subunits COX4I, COX5A, COX5B, COX6A, COX6B, COX6C, COX7A, COX7B, COX7C, COX8 and NDUFA4, which are encoded in the nuclear genome. The complex exists as a monomer or a dimer and forms supercomplexes (SCs) in the inner mitochondrial membrane with NADH-ubiquinone oxidoreductase (complex I, CI) and ubiquinol-cytochrome c oxidoreductase (cytochrome b-c1 complex, complex III, CIII), resulting in different assemblies (supercomplex SCI(1)III(2)IV(1) and megacomplex MCI(2)III(2)IV(2)). Found in a complex with TMEM177, COA6, COX18, COX20, SCO1 and SCO2. Interacts with TMEM177 in a COX20-dependent manner. Interacts with COX20. Interacts with COX16. It depends on Cu cation as a cofactor.

It is found in the mitochondrion inner membrane. It catalyses the reaction 4 Fe(II)-[cytochrome c] + O2 + 8 H(+)(in) = 4 Fe(III)-[cytochrome c] + 2 H2O + 4 H(+)(out). Component of the cytochrome c oxidase, the last enzyme in the mitochondrial electron transport chain which drives oxidative phosphorylation. The respiratory chain contains 3 multisubunit complexes succinate dehydrogenase (complex II, CII), ubiquinol-cytochrome c oxidoreductase (cytochrome b-c1 complex, complex III, CIII) and cytochrome c oxidase (complex IV, CIV), that cooperate to transfer electrons derived from NADH and succinate to molecular oxygen, creating an electrochemical gradient over the inner membrane that drives transmembrane transport and the ATP synthase. Cytochrome c oxidase is the component of the respiratory chain that catalyzes the reduction of oxygen to water. Electrons originating from reduced cytochrome c in the intermembrane space (IMS) are transferred via the dinuclear copper A center (CU(A)) of subunit 2 and heme A of subunit 1 to the active site in subunit 1, a binuclear center (BNC) formed by heme A3 and copper B (CU(B)). The BNC reduces molecular oxygen to 2 water molecules using 4 electrons from cytochrome c in the IMS and 4 protons from the mitochondrial matrix. The polypeptide is Cytochrome c oxidase subunit 2 (MT-CO2) (Apodemus semotus (Taiwan field mouse)).